A 169-amino-acid polypeptide reads, in one-letter code: Putative outer membrane protein BBA03 (169 aa).

The protein resides in the cell outer membrane. This chain is Putative outer membrane protein BBA03, found in Borreliella burgdorferi (strain ATCC 35210 / DSM 4680 / CIP 102532 / B31) (Borrelia burgdorferi).